We begin with the raw amino-acid sequence, 253 residues long: Polyprenal reductase (253 aa).

The next 4 membrane-spanning stretches (helical) occupy residues 18-38 (LSFFVGICSLFIAKSCLPEFL), 78-98 (FLSLVTLYFYPKFPIVWIIFG), 123-143 (HYLVGIWFYSVLLLILNISLY), and 200-220 (IIYSTLLPYEQEFYLTLVWVI).

The protein belongs to the steroid 5-alpha reductase family. Polyprenal reductase subfamily.

It localises to the endoplasmic reticulum membrane. It carries out the reaction a di-trans,poly-cis-dolichal + NADP(+) = a di-trans,poly-cis-polyprenal + NADPH + H(+). Its pathway is protein modification; protein glycosylation. Plays a key role in early steps of protein N-linked glycosylation by being involved in the conversion of polyprenol into dolichol. Acts as a polyprenal reductase that mediates the reduction of polyprenal into dolichal in a NADP-dependent mechanism. Dolichols are required for the synthesis of dolichol-linked monosaccharides and the oligosaccharide precursor used for N-glycosylation. The chain is Polyprenal reductase from Saccharomyces cerevisiae (strain ATCC 204508 / S288c) (Baker's yeast).